The primary structure comprises 345 residues: Phosphoribosylformylglycinamidine cyclo-ligase (345 aa).

Belongs to the AIR synthase family.

The protein localises to the cytoplasm. The catalysed reaction is 2-formamido-N(1)-(5-O-phospho-beta-D-ribosyl)acetamidine + ATP = 5-amino-1-(5-phospho-beta-D-ribosyl)imidazole + ADP + phosphate + H(+). Its pathway is purine metabolism; IMP biosynthesis via de novo pathway; 5-amino-1-(5-phospho-D-ribosyl)imidazole from N(2)-formyl-N(1)-(5-phospho-D-ribosyl)glycinamide: step 2/2. This is Phosphoribosylformylglycinamidine cyclo-ligase from Synechococcus sp. (strain CC9605).